Consider the following 142-residue polypeptide: MLQPKRTKHRKMFRIRHDKKDAFKGNKVSFGEYGLQATTSAWITARQIESARIAATRRMGREGQVIIRIFPHLSKTSKPIGVRMGSGKGSPEKWYSVVKRQTMMFEVSGIKPEVAKDALRLAGHKLPVKWRIVEASPKEEVI.

The protein belongs to the universal ribosomal protein uL16 family. As to quaternary structure, part of the 50S ribosomal subunit.

Its function is as follows. Binds 23S rRNA and is also seen to make contacts with the A and possibly P site tRNAs. The chain is Large ribosomal subunit protein uL16 from Mycoplasmopsis pulmonis (strain UAB CTIP) (Mycoplasma pulmonis).